We begin with the raw amino-acid sequence, 231 residues long: 2-C-methyl-D-erythritol 4-phosphate cytidylyltransferase (231 aa).

This sequence belongs to the IspD/TarI cytidylyltransferase family. IspD subfamily.

It carries out the reaction 2-C-methyl-D-erythritol 4-phosphate + CTP + H(+) = 4-CDP-2-C-methyl-D-erythritol + diphosphate. Its pathway is isoprenoid biosynthesis; isopentenyl diphosphate biosynthesis via DXP pathway; isopentenyl diphosphate from 1-deoxy-D-xylulose 5-phosphate: step 2/6. Functionally, catalyzes the formation of 4-diphosphocytidyl-2-C-methyl-D-erythritol from CTP and 2-C-methyl-D-erythritol 4-phosphate (MEP). This Pseudoalteromonas atlantica (strain T6c / ATCC BAA-1087) protein is 2-C-methyl-D-erythritol 4-phosphate cytidylyltransferase.